A 508-amino-acid polypeptide reads, in one-letter code: Small ribosomal subunit protein mS47 (508 aa).

It belongs to the enoyl-CoA hydratase/isomerase family. Mitochondrion-specific ribosomal protein mS47 subfamily. Component of the mitochondrial small ribosomal subunit (mt-SSU). Mature N.crassa 74S mitochondrial ribosomes consist of a small (37S) and a large (54S) subunit. The 37S small subunit contains a 16S ribosomal RNA (16S mt-rRNA) and 32 different proteins. The 54S large subunit contains a 23S rRNA (23S mt-rRNA) and 42 different proteins. mS47 forms a protuberance of the N.crassa mitoribosome and retains a solvent-exposed cavity liekly capable of accommodating a substrate, in accordance with it being an active enzyme as well as an integral constituent of the mitoribosome.

It is found in the mitochondrion. The catalysed reaction is 3-hydroxy-2-methylpropanoyl-CoA + H2O = 3-hydroxy-2-methylpropanoate + CoA + H(+). In terms of biological role, component of the mitochondrial ribosome (mitoribosome), a dedicated translation machinery responsible for the synthesis of mitochondrial genome-encoded proteins, including at least some of the essential transmembrane subunits of the mitochondrial respiratory chain. The mitoribosomes are attached to the mitochondrial inner membrane and translation products are cotranslationally integrated into the membrane. mS47 has enzymatic activity in vitro, and is able to catalyze the specific hydrolysis of 3-hydroxyisobutyryl-CoA (HIBYL-CoA). However, because the turnover rate of mS47 is only a fraction of that of the homologous mammalian enzyme, the physiological function of this activity remains unclear. The sequence is that of Small ribosomal subunit protein mS47 (ehd3) from Neurospora crassa (strain ATCC 24698 / 74-OR23-1A / CBS 708.71 / DSM 1257 / FGSC 987).